A 956-amino-acid chain; its full sequence is Glycine dehydrogenase (decarboxylating) (956 aa).

Lysine 697 is modified (N6-(pyridoxal phosphate)lysine).

The protein belongs to the GcvP family. As to quaternary structure, the glycine cleavage system is composed of four proteins: P, T, L and H. Pyridoxal 5'-phosphate is required as a cofactor.

The enzyme catalyses N(6)-[(R)-lipoyl]-L-lysyl-[glycine-cleavage complex H protein] + glycine + H(+) = N(6)-[(R)-S(8)-aminomethyldihydrolipoyl]-L-lysyl-[glycine-cleavage complex H protein] + CO2. The glycine cleavage system catalyzes the degradation of glycine. The P protein binds the alpha-amino group of glycine through its pyridoxal phosphate cofactor; CO(2) is released and the remaining methylamine moiety is then transferred to the lipoamide cofactor of the H protein. This Cereibacter sphaeroides (strain KD131 / KCTC 12085) (Rhodobacter sphaeroides) protein is Glycine dehydrogenase (decarboxylating).